The following is an 861-amino-acid chain: Leucine--tRNA ligase (861 aa).

Positions 42–52 match the 'HIGH' region motif; sequence PYPSGNLHMGH. The 'KMSKS' region signature appears at 620 to 624; it reads KMSKS. Position 623 (lysine 623) interacts with ATP.

Belongs to the class-I aminoacyl-tRNA synthetase family.

Its subcellular location is the cytoplasm. The enzyme catalyses tRNA(Leu) + L-leucine + ATP = L-leucyl-tRNA(Leu) + AMP + diphosphate. In Baumannia cicadellinicola subsp. Homalodisca coagulata, this protein is Leucine--tRNA ligase.